The chain runs to 164 residues: Arginine repressor (164 aa).

It belongs to the ArgR family.

The protein localises to the cytoplasm. It participates in amino-acid biosynthesis; L-arginine biosynthesis [regulation]. Regulates arginine biosynthesis genes. The chain is Arginine repressor from Mycobacterium avium (strain 104).